Reading from the N-terminus, the 115-residue chain is Probable 4-amino-4-deoxy-L-arabinose-phosphoundecaprenol flippase subunit ArnE (115 aa).

The next 3 helical transmembrane spans lie at 42 to 62, 65 to 85, and 93 to 112; these read PWPWLALLALGLGLLCWLLLL, VEVGSAYPMLALNFVLVTLAA, and VDRRHLAGLLLIVAGVALLG. The 68-residue stretch at 46–113 folds into the EamA domain; the sequence is LALLALGLGL…IVAGVALLGR (68 aa).

It belongs to the ArnE family. As to quaternary structure, heterodimer of ArnE and ArnF.

The protein localises to the cell inner membrane. Its pathway is bacterial outer membrane biogenesis; lipopolysaccharide biosynthesis. Translocates 4-amino-4-deoxy-L-arabinose-phosphoundecaprenol (alpha-L-Ara4N-phosphoundecaprenol) from the cytoplasmic to the periplasmic side of the inner membrane. The chain is Probable 4-amino-4-deoxy-L-arabinose-phosphoundecaprenol flippase subunit ArnE from Pseudomonas aeruginosa (strain LESB58).